The sequence spans 162 residues: Putative ankyrin repeat protein R664 (162 aa).

ANK repeat units lie at residues 10 to 40 (KKLV…NVNY), 47 to 78 (NDTP…DVNY), and 82 to 111 (YHET…NPYL).

The sequence is that of Putative ankyrin repeat protein R664 from Acanthamoeba polyphaga mimivirus (APMV).